The chain runs to 377 residues: MHVLVLGSGQLARMMSLAGAPLNIQISAYDVGSGNVVHPLTQQVLGHGLENAIEQVDAITAEFEHIPHDVLDICELSGKFLPSTAAIKAGGDRRVEKALLDNAGVRNAKHYVIETREDFERAIEHVGIPMVLKSALGGYDGKGQWRLKEAAQIETIWAEMAECIAATPTQAIVAEEFVPFNREVSLVGARGKDGSVEVYPLAENVHTNGVLSLSTAIDAPELQAQAKQMFTAVADSLNYVGVLALEFFDVEGTLLVNEIAPRVHNSGHWTQQGAETCQFENHLRAVCGLPLGSTKLIRETSMVNILGEDTLPEALLAMDGCHIHWYGKEKREGRKMGHINVCGDYPGELHRRLCALAEVLDPMIFPAVHEFAKQAQR.

ATP contacts are provided by residues arginine 93, lysine 133, glycine 138–glutamine 144, glutamate 175–valine 178, glutamate 183, histidine 206, and asparagine 257–glutamate 258. One can recognise an ATP-grasp domain in the interval lysine 97 to cysteine 287.

Belongs to the PurK/PurT family. In terms of assembly, homodimer.

It catalyses the reaction 5-amino-1-(5-phospho-beta-D-ribosyl)imidazole + hydrogencarbonate + ATP = 5-carboxyamino-1-(5-phospho-D-ribosyl)imidazole + ADP + phosphate + 2 H(+). Its pathway is purine metabolism; IMP biosynthesis via de novo pathway; 5-amino-1-(5-phospho-D-ribosyl)imidazole-4-carboxylate from 5-amino-1-(5-phospho-D-ribosyl)imidazole (N5-CAIR route): step 1/2. In terms of biological role, catalyzes the ATP-dependent conversion of 5-aminoimidazole ribonucleotide (AIR) and HCO(3)(-) to N5-carboxyaminoimidazole ribonucleotide (N5-CAIR). The protein is N5-carboxyaminoimidazole ribonucleotide synthase of Vibrio parahaemolyticus serotype O3:K6 (strain RIMD 2210633).